We begin with the raw amino-acid sequence, 67 residues long: Bowman-Birk type proteinase inhibitor A6 (67 aa).

6 cysteine pairs are disulfide-bonded: Cys-9–Cys-66, Cys-10–Cys-29, Cys-13–Cys-62, Cys-16–Cys-27, Cys-36–Cys-43, and Cys-40–Cys-54.

This sequence belongs to the Bowman-Birk serine protease inhibitor family. Expressed in bulb (at protein level).

Its function is as follows. Serine protease inhibitor. Strongly inhibits trypsin (Ki = 4 nM) and elastase (Ki = 4.8 nM). Also inhibits chymotrypsin with a Ki of 22 nM. Does not inhibit bacterial subtilisin. This chain is Bowman-Birk type proteinase inhibitor A6, found in Hyacinthus orientalis (Common hyacinth).